Reading from the N-terminus, the 242-residue chain is Ubiquinone biosynthesis O-methyltransferase (242 aa).

Residues R44, G64, D85, and M129 each coordinate S-adenosyl-L-methionine.

It belongs to the methyltransferase superfamily. UbiG/COQ3 family.

The enzyme catalyses a 3-demethylubiquinol + S-adenosyl-L-methionine = a ubiquinol + S-adenosyl-L-homocysteine + H(+). It carries out the reaction a 3-(all-trans-polyprenyl)benzene-1,2-diol + S-adenosyl-L-methionine = a 2-methoxy-6-(all-trans-polyprenyl)phenol + S-adenosyl-L-homocysteine + H(+). It functions in the pathway cofactor biosynthesis; ubiquinone biosynthesis. Its function is as follows. O-methyltransferase that catalyzes the 2 O-methylation steps in the ubiquinone biosynthetic pathway. This Yersinia enterocolitica serotype O:8 / biotype 1B (strain NCTC 13174 / 8081) protein is Ubiquinone biosynthesis O-methyltransferase.